We begin with the raw amino-acid sequence, 31 residues long: Cyclotide vpub-B (31 aa).

Positions glycine 1–asparagine 31 form a cross-link, cyclopeptide (Gly-Asn). Cystine bridges form between cysteine 5/cysteine 21, cysteine 9/cysteine 23, and cysteine 14/cysteine 28.

This sequence belongs to the cyclotide family. Bracelet subfamily. Post-translationally, this is a cyclic peptide.

Its function is as follows. Probably participates in a plant defense mechanism. This Viola pubescens (Downy yellow violet) protein is Cyclotide vpub-B.